A 370-amino-acid chain; its full sequence is Histidinol-phosphate aminotransferase 2 (370 aa).

K230 is subject to N6-(pyridoxal phosphate)lysine.

It belongs to the class-II pyridoxal-phosphate-dependent aminotransferase family. Histidinol-phosphate aminotransferase subfamily. Homodimer. It depends on pyridoxal 5'-phosphate as a cofactor.

The catalysed reaction is L-histidinol phosphate + 2-oxoglutarate = 3-(imidazol-4-yl)-2-oxopropyl phosphate + L-glutamate. It functions in the pathway amino-acid biosynthesis; L-histidine biosynthesis; L-histidine from 5-phospho-alpha-D-ribose 1-diphosphate: step 7/9. This Pseudomonas fluorescens (strain Pf0-1) protein is Histidinol-phosphate aminotransferase 2.